The primary structure comprises 937 residues: Isoleucine--tRNA ligase (937 aa).

The short motif at 58–68 is the 'HIGH' region element; it reads PYANGTLHLGH. Glu-561 is a binding site for L-isoleucyl-5'-AMP. Residues 602–606 carry the 'KMSKS' region motif; it reads KMSKS. Lys-605 lines the ATP pocket. Cys-900, Cys-903, Cys-920, and Cys-923 together coordinate Zn(2+).

The protein belongs to the class-I aminoacyl-tRNA synthetase family. IleS type 1 subfamily. In terms of assembly, monomer. The cofactor is Zn(2+).

Its subcellular location is the cytoplasm. It carries out the reaction tRNA(Ile) + L-isoleucine + ATP = L-isoleucyl-tRNA(Ile) + AMP + diphosphate. Its function is as follows. Catalyzes the attachment of isoleucine to tRNA(Ile). As IleRS can inadvertently accommodate and process structurally similar amino acids such as valine, to avoid such errors it has two additional distinct tRNA(Ile)-dependent editing activities. One activity is designated as 'pretransfer' editing and involves the hydrolysis of activated Val-AMP. The other activity is designated 'posttransfer' editing and involves deacylation of mischarged Val-tRNA(Ile). This Histophilus somni (strain 2336) (Haemophilus somnus) protein is Isoleucine--tRNA ligase.